Here is a 219-residue protein sequence, read N- to C-terminus: Large ribosomal subunit protein uL3 (219 aa).

Belongs to the universal ribosomal protein uL3 family. In terms of assembly, part of the 50S ribosomal subunit. Forms a cluster with proteins L14 and L19.

One of the primary rRNA binding proteins, it binds directly near the 3'-end of the 23S rRNA, where it nucleates assembly of the 50S subunit. This is Large ribosomal subunit protein uL3 from Chlamydia pneumoniae (Chlamydophila pneumoniae).